Consider the following 429-residue polypeptide: Glutamyl-tRNA reductase (429 aa).

Substrate is bound by residues 52–55, Ser110, 115–117, and Gln121; these read TCNR and EAQ. The active-site Nucleophile is the Cys53. 190–195 is a binding site for NADP(+); it reads GAGAMI.

This sequence belongs to the glutamyl-tRNA reductase family. As to quaternary structure, homodimer.

The catalysed reaction is (S)-4-amino-5-oxopentanoate + tRNA(Glu) + NADP(+) = L-glutamyl-tRNA(Glu) + NADPH + H(+). It functions in the pathway porphyrin-containing compound metabolism; protoporphyrin-IX biosynthesis; 5-aminolevulinate from L-glutamyl-tRNA(Glu): step 1/2. Catalyzes the NADPH-dependent reduction of glutamyl-tRNA(Glu) to glutamate 1-semialdehyde (GSA). This is Glutamyl-tRNA reductase from Verminephrobacter eiseniae (strain EF01-2).